A 255-amino-acid chain; its full sequence is MKVKVFDLNGQPVDEIELPKVFFTPFRPDLIRRAVIASWTHRIQPQGRDPMAGKRRVTENIGKGHGMARVERLKTPPRYAAFVPFARGGRRTHPPKVEKIIWEGINKKERRLAIMSAIAATANYDIVKARGHIIDNVPQLPLIVVDDLQKVSKTRETREIFKKLGIWDDIERAKEKTGIRAGKGKMRGRRYKKAKGPLIVVGKNEGIVFGARNHPGVDVVVVDNLGVEHLAPGTHPGRLTVWTVSAIERLKEIYG.

It belongs to the universal ribosomal protein uL4 family. As to quaternary structure, part of the 50S ribosomal subunit.

One of the primary rRNA binding proteins, this protein initially binds near the 5'-end of the 23S rRNA. It is important during the early stages of 50S assembly. It makes multiple contacts with different domains of the 23S rRNA in the assembled 50S subunit and ribosome. Its function is as follows. Forms part of the polypeptide exit tunnel. This Pyrococcus abyssi (strain GE5 / Orsay) protein is Large ribosomal subunit protein uL4.